Here is a 329-residue protein sequence, read N- to C-terminus: G-protein coupled bile acid receptor 1 (329 aa).

At 1 to 15 (MMTPNSTELSAIPMG) the chain is on the extracellular side. Asn5 is a glycosylation site (N-linked (GlcNAc...) asparagine). A helical transmembrane segment spans residues 16 to 36 (VLGLSLALASLIVIANLLLAL). Residues 37-49 (GIALDRHLRSPPA) are Cytoplasmic-facing. A helical transmembrane segment spans residues 50 to 70 (GCFFLSLLLAGLLTGLALPML). Over 71-84 (PGLWSRNHQGYWSC) the chain is Extracellular. A disulfide bridge connects residues Cys84 and Cys154. Residues 85 to 105 (LLLHLTPNFCFLSLLANLLLV) traverse the membrane as a helical segment. Residues 106–124 (HGERYMAVLQPLRPHGSVR) lie on the Cytoplasmic side of the membrane. The helical transmembrane segment at 125 to 145 (LALFLTWVSSLFFASLPALGW) threads the bilayer. Residues 146–164 (NHWSPDANCSSQAVFPAPY) are Extracellular-facing. Asn153 carries an N-linked (GlcNAc...) asparagine glycan. The chain crosses the membrane as a helical span at residues 165-185 (LYLEVYGLLLPAVGATALLSV). At 186-229 (RVLATAHRQLCEIRRLERAVCRDVPSTLARALTWRQARAQAGAT) the chain is on the cytoplasmic side. Residues 230-250 (LLFLLCWGPYVATLLLSVLAY) traverse the membrane as a helical segment. At 251-260 (ERRPPLGPGT) the chain is on the extracellular side. A helical membrane pass occupies residues 261–281 (LLSLISLGSTSAAAVPVAMGL). The Cytoplasmic segment spans residues 282 to 329 (GDQRYTAPWRTAAQRCLRVLRGRAKRDNPGPSTAYHTSSQCSIDLDLN).

The protein belongs to the G-protein coupled receptor 1 family.

Its subcellular location is the cell membrane. In terms of biological role, receptor for bile acid. Bile acid-binding induces its internalization, activation of extracellular signal-regulated kinase and intracellular cAMP production. May be involved in the suppression of macrophage functions by bile acids. Involved in bile acid promoted GLP1R secretion. The chain is G-protein coupled bile acid receptor 1 (Gpbar1) from Mus musculus (Mouse).